A 246-amino-acid polypeptide reads, in one-letter code: Probable phosphatase Tola_0828 (246 aa).

H8, H10, H16, H41, E74, H102, H132, D193, and H195 together coordinate Zn(2+).

This sequence belongs to the PHP family. Requires Zn(2+) as cofactor.

This Tolumonas auensis (strain DSM 9187 / NBRC 110442 / TA 4) protein is Probable phosphatase Tola_0828.